Here is a 90-residue protein sequence, read N- to C-terminus: Conotoxin Ca8.2 (90 aa).

An N-terminal signal peptide occupies residues 1–21 (MMLKMGAMFVLLLLFILPSSQ). Positions 22–46 (QEGDVQARKTHLKRGFYGTLAMSTR) are excised as a propeptide. Gln-89 is subject to Glutamine amide.

Belongs to the conotoxin S superfamily. Contains 5 disulfide bonds. Expressed by the venom duct.

The protein localises to the secreted. The chain is Conotoxin Ca8.2 from Conus caracteristicus (Characteristic cone).